A 104-amino-acid polypeptide reads, in one-letter code: MLLNLFKFSKKLFQENFNKVKLLNHCKSFLFLGESDNKFFTNEKSELVFSDKRDRPFSSDRINRPFSPDKKGEPIFPDKRDRPFSPDRINRPFSPDKKGEPIFP.

The segment at 55 to 104 (RPFSSDRINRPFSPDKKGEPIFPDKRDRPFSPDRINRPFSPDKKGEPIFP) is disordered.

Its subcellular location is the plastid. This is an uncharacterized protein from Euglena longa (Euglenophycean alga).